A 430-amino-acid chain; its full sequence is Shufflon protein A' (430 aa).

The tract at residues 1–361 is constant region; that stretch reads MKKYDRGWAS…TGAILSCQSG (361 aa). A variable region region spans residues 362-430; sequence TWGTIGGKLK…GCIASCVTLN (69 aa).

This Escherichia coli protein is Shufflon protein A'.